Reading from the N-terminus, the 308-residue chain is HPr kinase/phosphorylase (308 aa).

Active-site residues include His-138 and Lys-159. 153–160 (GESGLGKS) provides a ligand contact to ATP. Ser-160 provides a ligand contact to Mg(2+). Catalysis depends on Asp-177, which acts as the Proton acceptor; for phosphorylation activity. Proton donor; for dephosphorylation activity. Residues 201-210 (LEVRGLGLLD) are important for the catalytic mechanism of both phosphorylation and dephosphorylation. Residue Glu-202 participates in Mg(2+) binding. Arg-243 is an active-site residue. The segment at 264–269 (QVAAGR) is important for the catalytic mechanism of dephosphorylation.

The protein belongs to the HPrK/P family. In terms of assembly, homohexamer. Mg(2+) serves as cofactor.

It carries out the reaction [HPr protein]-L-serine + ATP = [HPr protein]-O-phospho-L-serine + ADP + H(+). The catalysed reaction is [HPr protein]-O-phospho-L-serine + phosphate + H(+) = [HPr protein]-L-serine + diphosphate. Its function is as follows. Catalyzes the ATP- as well as the pyrophosphate-dependent phosphorylation of a specific serine residue in HPr, a phosphocarrier protein of the phosphoenolpyruvate-dependent sugar phosphotransferase system (PTS). HprK/P also catalyzes the pyrophosphate-producing, inorganic phosphate-dependent dephosphorylation (phosphorolysis) of seryl-phosphorylated HPr (P-Ser-HPr). The chain is HPr kinase/phosphorylase from Bordetella bronchiseptica (strain ATCC BAA-588 / NCTC 13252 / RB50) (Alcaligenes bronchisepticus).